A 1013-amino-acid chain; its full sequence is GTPase-activating protein BEM3 (1013 aa).

Disordered stretches follow at residues 90-197 (TVVE…GSPA), 258-277 (GSRY…PESI), 282-301 (SDLQ…TDLG), and 307-421 (VDTT…HQSK). Positions 143 to 160 (QEATSGAQQVPLLTSSKS) are enriched in polar residues. Composition is skewed to polar residues over residues 309 to 319 (TTFNAEDNPTG), 333 to 388 (TLQN…TSSN), and 404 to 418 (KSYS…SNSH). Residues 555–662 (EFAKEGMLLV…WISVLTTLCD (108 aa)) form the PH domain. The tract at residues 702–726 (AMDATSPTRPNDPNPVSLTSEEEKE) is disordered. Residues 706 to 720 (TSPTRPNDPNPVSLT) show a composition bias toward polar residues. The Rho-GAP domain occupies 799–1013 (LQLSSHPYQG…PPVNIHIPQI (215 aa)).

The protein localises to the cytoplasm. Its function is as follows. GTPase-activating protein (GAP) for CDC42 and less efficiently for RHO1. Negative regulator of the pheromone-response pathway through the STE20 protein kinase. The chain is GTPase-activating protein BEM3 (BEM3) from Eremothecium gossypii (strain ATCC 10895 / CBS 109.51 / FGSC 9923 / NRRL Y-1056) (Yeast).